The following is a 931-amino-acid chain: NEDD4-binding protein 1 (931 aa).

One can recognise a KH-like domain in the interval 75 to 159; it reads GKAVRSAKEY…VQQFVKLFEN (85 aa). Disordered stretches follow at residues 289-329, 413-474, and 547-571; these read MTSK…HNDS, QEWS…TQVD, and CTSAKSKTAVHQKSAGPSPVQNSHS. Basic and acidic residues-rich tracts occupy residues 290–309 and 319–329; these read TSKERQSCKRRFSDAEESLP and QEVKSVSHNDS. Residues 416–434 show a composition bias toward polar residues; sequence SSKTPKTTNLRLGSNANSS. 2 stretches are compositionally biased toward basic and acidic residues: residues 435 to 444 and 456 to 467; these read HKLEDEDISC and NETRTERHKARD. The span at 547 to 557 shows a compositional bias: polar residues; that stretch reads CTSAKSKTAVH. The RNase NYN domain maps to 659-811; it reads LKHIIIDGSN…LGRNGPRLDD (153 aa). The tract at residues 841–863 is disordered; it reads LFMHVPNPASSSQQPKNRAHGDH. The interval 884 to 931 is coCUN; it reads RSASETVWLREALIKIFPDYEQRQKIDKILADHPFMRDLNALSAMVLD.

Belongs to the N4BP1 family.

It localises to the cytoplasm. The protein localises to the cytosol. It is found in the nucleus. The protein resides in the nucleolus. Its subcellular location is the PML body. Its function is as follows. Potent suppressor of cytokine production that acts as a regulator of innate immune signaling and inflammation. Acts as a key negative regulator of select cytokine and chemokine responses elicited by TRIF-independent Toll-like receptors (TLRs), thereby limiting inflammatory cytokine responses to minor insults. Has ribonuclease activity. This Gallus gallus (Chicken) protein is NEDD4-binding protein 1.